The sequence spans 215 residues: Probable transaldolase (215 aa).

The Schiff-base intermediate with substrate role is filled by Lys83.

Belongs to the transaldolase family. Type 3B subfamily.

It is found in the cytoplasm. The catalysed reaction is D-sedoheptulose 7-phosphate + D-glyceraldehyde 3-phosphate = D-erythrose 4-phosphate + beta-D-fructose 6-phosphate. It functions in the pathway carbohydrate degradation; pentose phosphate pathway; D-glyceraldehyde 3-phosphate and beta-D-fructose 6-phosphate from D-ribose 5-phosphate and D-xylulose 5-phosphate (non-oxidative stage): step 2/3. Functionally, transaldolase is important for the balance of metabolites in the pentose-phosphate pathway. This chain is Probable transaldolase, found in Clostridium perfringens (strain 13 / Type A).